The sequence spans 876 residues: Pre-mRNA-splicing factor ATP-dependent RNA helicase-like protein PRP2 (876 aa).

The tract at residues 1–111 is disordered; sequence MSSITSETGK…KGLLGDSENE (111 aa). An N-acetylserine modification is found at Ser-2. The segment covering 61 to 70 has biased composition (polar residues); sequence VFSNTNQGPE. A Helicase ATP-binding domain is found at 233 to 399; sequence LQEIKKNQVL…FDNCPIFNVP (167 aa). Position 246-253 (246-253) interacts with ATP; that stretch reads GETGSGKT. The DEAH box motif lies at 346 to 349; sequence DEAH. Positions 424 to 598 constitute a Helicase C-terminal domain; that stretch reads TIFQIHTTQS…NTVLLLLSLG (175 aa).

Belongs to the DEAD box helicase family. DEAH subfamily. As to quaternary structure, interacts directly with pre-mRNA. According to PubMed:2251118, associated with spliceosomes prior to and throughout step 1 of the splicing reaction. According to PubMed:8943336, it leaves the spliceosome before reaction 1. Interacts with SPP2.

Its subcellular location is the nucleus. The enzyme catalyses ATP + H2O = ADP + phosphate + H(+). In terms of biological role, involved in pre-mRNA splicing. Is required together with ATP and at least one other factor, for the first cleavage-ligation reaction. Functions as a molecular motor in the activation of the precatalytic spliceosome for the first transesterification reaction of pre-mRNA splicing by hydrolyzing ATP to cause the activation of the spliceosome without the occurrence of splicing. Capable of hydrolyzing nucleoside triphosphates in the presence of single-stranded RNAs such as poly(U). The sequence is that of Pre-mRNA-splicing factor ATP-dependent RNA helicase-like protein PRP2 (PRP2) from Saccharomyces cerevisiae (strain ATCC 204508 / S288c) (Baker's yeast).